Reading from the N-terminus, the 93-residue chain is Small ribosomal subunit protein uS19 (93 aa).

It belongs to the universal ribosomal protein uS19 family.

Protein S19 forms a complex with S13 that binds strongly to the 16S ribosomal RNA. The polypeptide is Small ribosomal subunit protein uS19 (Kocuria rhizophila (strain ATCC 9341 / DSM 348 / NBRC 103217 / DC2201)).